The primary structure comprises 379 residues: Putative zinc metalloprotease BMEI0829 (379 aa).

A Zn(2+)-binding site is contributed by His-33. Glu-34 is an active-site residue. His-37 provides a ligand contact to Zn(2+). The next 4 helical transmembrane spans lie at 39–61, 122–144, 305–327, and 355–377; these read LVAR…ELLG, VFAG…FALY, FDWL…LFPL, and IFYR…NDLF. The PDZ domain maps to 133–208; the sequence is TIAIFSVFFA…LNFTVERDGK (76 aa).

This sequence belongs to the peptidase M50B family. Zn(2+) is required as a cofactor.

It is found in the cell inner membrane. In Brucella melitensis biotype 1 (strain ATCC 23456 / CCUG 17765 / NCTC 10094 / 16M), this protein is Putative zinc metalloprotease BMEI0829.